A 418-amino-acid chain; its full sequence is Voltage-gated ClC-type chloride channel ClcB (418 aa).

10 helical membrane-spanning segments follow: residues 5-25 (LLIA…FRHA), 54-74 (LLTP…WQKF), 146-166 (LWIA…PLAG), 168-188 (LFIA…PVII), 222-242 (ALII…LTLM), 258-278 (WQLA…PAVW), 291-311 (APPL…AVLA), 316-336 (GAPG…GMLY), 352-372 (LLLG…APIM), and 380-400 (MTGE…ASVI).

This sequence belongs to the chloride channel (TC 2.A.49) family. ClcB subfamily.

The protein localises to the cell inner membrane. Functionally, probably acts as an electrical shunt for an outwardly-directed proton pump that is linked to amino acid decarboxylation, as part of the extreme acid resistance (XAR) response. The chain is Voltage-gated ClC-type chloride channel ClcB from Shigella boydii serotype 18 (strain CDC 3083-94 / BS512).